A 362-amino-acid polypeptide reads, in one-letter code: Solute carrier family 25 member 3 (362 aa).

The transit peptide at 1-49 (MYSSVVHLARANPFNAPHLQLVHDGLAGPRSDPAGPPGPPRRSRNLAAA) directs the protein to the mitochondrion. Topologically, residues 50–63 (AVEEQYSCDYGSGR) are mitochondrial intermembrane. Solcar repeat units follow at residues 63-147 (RFFI…FKVL), 160-244 (WRTS…TVEA), and 261-339 (EQLV…VKVY). The helical transmembrane segment at 64–86 (FFILCGLGGIISCGTTHTALVPL) threads the bilayer. At 87-121 (DLVKCRMQVDPQKYKSIFNGFSVTLKEDGFRGLAK) the chain is on the mitochondrial matrix side. Lys-99 carries the N6-acetyllysine modification. An N6-methyllysine modification is found at Lys-112. Residues 122–141 (GWAPTFIGYSLQGLCKFGFY) traverse the membrane as a helical segment. Residues 142 to 161 (EVFKVLYSNMLGEENAYLWR) are Mitochondrial intermembrane-facing. A helical membrane pass occupies residues 162-183 (TSLYLAASASAEFFADIALAPM). The Mitochondrial matrix portion of the chain corresponds to 184–218 (EAAKVRIQTQPGYANTLRDAAPKMYKEEGLKAFYK). Tyr-196 carries the phosphotyrosine modification. An N6-acetyllysine modification is found at Lys-209. A helical transmembrane segment spans residues 219–238 (GVAPLWMRQIPYTMMKFACF). The Mitochondrial intermembrane portion of the chain corresponds to 239-261 (ERTVEALYKFVVPKPRSECSKPE). Residues 262–284 (QLVVTFVAGYIAGVFCAIVSHPA) traverse the membrane as a helical segment. Over 285 to 314 (DSVVSVLNKEKGSSASEVLKRLGFRGVWKG) the chain is Mitochondrial matrix. Residues 315–333 (LFARIIMIGTLTALQWFIY) form a helical membrane-spanning segment. Residues 334 to 362 (DSVKVYFRLPRPPPPEMPESLKKKLGYTQ) lie on the Mitochondrial intermembrane side of the membrane.

It belongs to the mitochondrial carrier (TC 2.A.29) family. As to quaternary structure, interacts with PPIF; the interaction is impaired by CsA. As to expression, expressed in heart, diaphragm and skeletal muscle (at protein level). Not detected in liver, lung, brain, and kidney (at protein level). In terms of tissue distribution, ubiquitous (at protein level).

The protein resides in the mitochondrion inner membrane. The catalysed reaction is phosphate(in) + H(+)(in) = phosphate(out) + H(+)(out). Its activity is regulated as follows. Up-regulated in the presence of cardiolipin. In terms of biological role, inorganic ion transporter that transports phosphate or copper ions across the mitochondrial inner membrane into the matrix compartment. Mediates proton-coupled symport of phosphate ions necessary for mitochondrial oxidative phosphorylation of ADP to ATP. Transports copper ions probably in the form of anionic copper(I) complexes to maintain mitochondrial matrix copper pool and to supply copper for cytochrome C oxidase complex assembly. May also play a role in regulation of the mitochondrial permeability transition pore (mPTP). The protein is Solute carrier family 25 member 3 of Bos taurus (Bovine).